Reading from the N-terminus, the 376-residue chain is Chaperone protein DnaJ (376 aa).

One can recognise a J domain in the interval 5–70; it reads DYYEILGVSK…QKRAAYDQYG (66 aa). The CR-type zinc finger occupies 131–209; sequence GVTKEIRIPT…CHGHGRVERS (79 aa). The Zn(2+) site is built by Cys-144, Cys-147, Cys-161, Cys-164, Cys-183, Cys-186, Cys-197, and Cys-200. CXXCXGXG motif repeat units lie at residues 144–151, 161–168, 183–190, and 197–204; these read CDVCHGSG, CPTCHGSG, CPHCQGRG, and CNKCHGHG.

The protein belongs to the DnaJ family. Homodimer. Zn(2+) serves as cofactor.

Its subcellular location is the cytoplasm. Functionally, participates actively in the response to hyperosmotic and heat shock by preventing the aggregation of stress-denatured proteins and by disaggregating proteins, also in an autonomous, DnaK-independent fashion. Unfolded proteins bind initially to DnaJ; upon interaction with the DnaJ-bound protein, DnaK hydrolyzes its bound ATP, resulting in the formation of a stable complex. GrpE releases ADP from DnaK; ATP binding to DnaK triggers the release of the substrate protein, thus completing the reaction cycle. Several rounds of ATP-dependent interactions between DnaJ, DnaK and GrpE are required for fully efficient folding. Also involved, together with DnaK and GrpE, in the DNA replication of plasmids through activation of initiation proteins. The protein is Chaperone protein DnaJ of Escherichia coli O157:H7 (strain EC4115 / EHEC).